The primary structure comprises 83 residues: Short neurotoxin OKI-01/OKI-19 (83 aa).

An N-terminal signal peptide occupies residues 1-21 (MKTLLLTLVVVTIVCLDLGYT). Intrachain disulfides connect Cys-24/Cys-45, Cys-38/Cys-62, Cys-64/Cys-75, and Cys-76/Cys-81.

The protein belongs to the three-finger toxin family. Short-chain subfamily. Type I alpha-neurotoxin sub-subfamily. As to expression, expressed by the venom gland.

It localises to the secreted. Binds to muscle nicotinic acetylcholine receptor (nAChR) and inhibit acetylcholine from binding to the receptor, thereby impairing neuromuscular transmission. This is Short neurotoxin OKI-01/OKI-19 from Laticauda laticaudata (Blue-ringed sea krait).